A 502-amino-acid chain; its full sequence is Phenylacetaldehyde dehydrogenase (502 aa).

251-256 (GSTEVG) serves as a coordination point for NAD(+). Residues E273 and C307 contribute to the active site.

Belongs to the aldehyde dehydrogenase family.

The catalysed reaction is 2-phenylacetaldehyde + NAD(+) + H2O = 2-phenylacetate + NADH + 2 H(+). The protein operates within aromatic compound metabolism. In terms of biological role, phenylacetaldehyde dehydrogenase that catalyzes the last step in the aerobic styrene degradation pathway by mediating oxidation of phenylacetaldehyde to phenylacetic acid. The chain is Phenylacetaldehyde dehydrogenase (styD) from Pseudomonas fluorescens.